A 247-amino-acid chain; its full sequence is 23S rRNA (guanosine-2'-O-)-methyltransferase RlmB (247 aa).

S-adenosyl-L-methionine contacts are provided by Gly197, Ile217, and Leu226.

It belongs to the class IV-like SAM-binding methyltransferase superfamily. RNA methyltransferase TrmH family. RlmB subfamily.

The protein resides in the cytoplasm. It carries out the reaction guanosine(2251) in 23S rRNA + S-adenosyl-L-methionine = 2'-O-methylguanosine(2251) in 23S rRNA + S-adenosyl-L-homocysteine + H(+). Its function is as follows. Specifically methylates the ribose of guanosine 2251 in 23S rRNA. In Vibrio vulnificus (strain CMCP6), this protein is 23S rRNA (guanosine-2'-O-)-methyltransferase RlmB.